Here is a 316-residue protein sequence, read N- to C-terminus: Transaldolase (316 aa).

Lys-127 serves as the catalytic Schiff-base intermediate with substrate.

The protein belongs to the transaldolase family. Type 2 subfamily.

It localises to the cytoplasm. The catalysed reaction is D-sedoheptulose 7-phosphate + D-glyceraldehyde 3-phosphate = D-erythrose 4-phosphate + beta-D-fructose 6-phosphate. Its pathway is carbohydrate degradation; pentose phosphate pathway; D-glyceraldehyde 3-phosphate and beta-D-fructose 6-phosphate from D-ribose 5-phosphate and D-xylulose 5-phosphate (non-oxidative stage): step 2/3. Its function is as follows. Transaldolase is important for the balance of metabolites in the pentose-phosphate pathway. This chain is Transaldolase, found in Helicobacter pylori (strain HPAG1).